Here is a 682-residue protein sequence, read N- to C-terminus: Potassium-transporting ATPase ATP-binding subunit (682 aa).

The next 4 helical transmembrane spans lie at 34-54 (PVMF…IAMA), 62-82 (ALFS…ANFA), 219-239 (IALT…TATL), and 254-274 (VLVA…LSAI). Asp-307 acts as the 4-aspartylphosphate intermediate in catalysis. Residues Asp-344, Glu-348, 377 to 384 (FTAQSRMS), and Lys-395 each bind ATP. Asp-518 and Asp-522 together coordinate Mg(2+). 3 helical membrane-spanning segments follow: residues 588–608 (FAII…LNIM), 616–636 (AILS…PLAL), and 656–676 (IYGL…DLLL).

It belongs to the cation transport ATPase (P-type) (TC 3.A.3) family. Type IA subfamily. In terms of assembly, the system is composed of three essential subunits: KdpA, KdpB and KdpC.

It localises to the cell inner membrane. It carries out the reaction K(+)(out) + ATP + H2O = K(+)(in) + ADP + phosphate + H(+). Part of the high-affinity ATP-driven potassium transport (or Kdp) system, which catalyzes the hydrolysis of ATP coupled with the electrogenic transport of potassium into the cytoplasm. This subunit is responsible for energy coupling to the transport system and for the release of the potassium ions to the cytoplasm. The sequence is that of Potassium-transporting ATPase ATP-binding subunit from Escherichia coli (strain ATCC 8739 / DSM 1576 / NBRC 3972 / NCIMB 8545 / WDCM 00012 / Crooks).